Consider the following 249-residue polypeptide: Ribonuclease HII (249 aa).

Over residues 1–19 (MAPRPKAPPQPAEPDPALP) the composition is skewed to pro residues. A disordered region spans residues 1-31 (MAPRPKAPPQPAEPDPALPRPRGRPPKAGAV). The RNase H type-2 domain occupies 52 to 240 (APVAGADEVG…VREQQLGLFP (189 aa)). The a divalent metal cation site is built by aspartate 58, glutamate 59, and aspartate 149.

This sequence belongs to the RNase HII family. Mn(2+) serves as cofactor. Requires Mg(2+) as cofactor.

The protein localises to the cytoplasm. The catalysed reaction is Endonucleolytic cleavage to 5'-phosphomonoester.. Functionally, endonuclease that specifically degrades the RNA of RNA-DNA hybrids. The chain is Ribonuclease HII from Xanthobacter autotrophicus (strain ATCC BAA-1158 / Py2).